A 233-amino-acid chain; its full sequence is Esterase FUS5 (233 aa).

Active-site charge relay system residues include Ser-105, Asp-159, and His-187.

Belongs to the LovG family.

Functionally, esterase; part of the gene cluster that mediates the biosynthesis of the mycotoxin fusarin C. Within the cluster, FUS1, FUS2, FUS8 and FUS9 are sufficient for fusarin production. The other FUS cluster members are not essential for fusarin C biosynthesis. The protein is Esterase FUS5 of Gibberella moniliformis (strain M3125 / FGSC 7600) (Maize ear and stalk rot fungus).